Consider the following 322-residue polypeptide: Lipoyl synthase (322 aa).

[4Fe-4S] cluster contacts are provided by Cys69, Cys74, Cys80, Cys95, Cys99, Cys102, and Ser309. The 218-residue stretch at 81-298 (FNHGTATFMI…KEIALELGFT (218 aa)) folds into the Radical SAM core domain.

Belongs to the radical SAM superfamily. Lipoyl synthase family. Requires [4Fe-4S] cluster as cofactor.

It is found in the cytoplasm. The catalysed reaction is [[Fe-S] cluster scaffold protein carrying a second [4Fe-4S](2+) cluster] + N(6)-octanoyl-L-lysyl-[protein] + 2 oxidized [2Fe-2S]-[ferredoxin] + 2 S-adenosyl-L-methionine + 4 H(+) = [[Fe-S] cluster scaffold protein] + N(6)-[(R)-dihydrolipoyl]-L-lysyl-[protein] + 4 Fe(3+) + 2 hydrogen sulfide + 2 5'-deoxyadenosine + 2 L-methionine + 2 reduced [2Fe-2S]-[ferredoxin]. Its pathway is protein modification; protein lipoylation via endogenous pathway; protein N(6)-(lipoyl)lysine from octanoyl-[acyl-carrier-protein]: step 2/2. In terms of biological role, catalyzes the radical-mediated insertion of two sulfur atoms into the C-6 and C-8 positions of the octanoyl moiety bound to the lipoyl domains of lipoate-dependent enzymes, thereby converting the octanoylated domains into lipoylated derivatives. This chain is Lipoyl synthase, found in Photobacterium profundum (strain SS9).